A 179-amino-acid chain; its full sequence is Probable chorismate pyruvate-lyase (179 aa).

Residues R82, L120, and E165 each contribute to the substrate site.

It belongs to the UbiC family.

The protein resides in the cytoplasm. It catalyses the reaction chorismate = 4-hydroxybenzoate + pyruvate. Its pathway is cofactor biosynthesis; ubiquinone biosynthesis. Its function is as follows. Removes the pyruvyl group from chorismate, with concomitant aromatization of the ring, to provide 4-hydroxybenzoate (4HB) for the ubiquinone pathway. The protein is Probable chorismate pyruvate-lyase of Vibrio cholerae serotype O1 (strain ATCC 39315 / El Tor Inaba N16961).